We begin with the raw amino-acid sequence, 851 residues long: MAKTNISPGMQQYLDIKKDYPDAFLLFRMGDFYELFYEDAVKAAQLLEIGLTSRNKNAENPIPMAGVPHHSAQQYIDVLIELGYKVAVAEQMEDPKQAVGVVKREVVQVITPGTVVDSAKPDSANNFLVAVDFDGCRYGLAYMDVSTGEFCVTDLADFTSVRSEIQNLKAKEVLLGFDLSEEEQTILVKQMNLLLSYEETVYEDKSLIDGQLTTVELTAAGKLLQYVHKTQMRELSHLQALVHYEIKDYLQMSYATKSSLDLVENARTNKKHGSLYWLLDETKTAMGMRLLRSWIDRPLVSKEAILERQEIIQVFLNAFIERTDLSNSLKGVYDIERLSSRVSFGKANPKDLLQLGHTLAQVPYIKAILESFNSPCVDKLVNDIDSLPELEYLIRTAIDTDAPATISEGSIIRTGFDERLDHYRKVMREGTGWIADIEAKERQASGINNLKIDYNKKDGYYFHVTTSNLSLVPEHFFRKATLKNSERYGTAELAKIEGQMLEAREESSSLEYDIFMCIRAQVETYINRLQKLAKTLATVDVLQSLAVVAETNHYIRPQFNDNHMITIQEGRHAVVEKVMGVQEYIPNSISFDQQTSIQLITGPNMSGKSTYMRQLALTVIMAQMGSFVAADHVDLPLFDAIFTRIGAADDLISGQSTFMVEMMEANQAIKRASDNSLILFDELGRGTATYDGMALAQAIIEYIHDRVGAKTIFATHYHELTDLSTKLTSLVNVHVATLEKDGDVTFLHKIAEGPADKSYGIHVAKIAGLPKSLLKRADEVLIRLETQSRSTEIISVPSKVEPSSAAREGQLSLFPDEDKSQEIIHTLEAIDVMNMTPLQAMTTLYELKKLL.

Position 602–609 (602–609 (GPNMSGKS)) interacts with ATP.

Belongs to the DNA mismatch repair MutS family.

In terms of biological role, this protein is involved in the repair of mismatches in DNA. It is possible that it carries out the mismatch recognition step. This protein has a weak ATPase activity. In Streptococcus pyogenes serotype M18 (strain MGAS8232), this protein is DNA mismatch repair protein MutS.